The following is a 513-amino-acid chain: Xylose import ATP-binding protein XylG (513 aa).

ABC transporter domains lie at 5-242 (LEMK…VGRE) and 259-505 (LRIE…LRSE). 37-44 (GENGSGKS) lines the ATP pocket.

The protein belongs to the ABC transporter superfamily. Xylose importer (TC 3.A.1.2.4) family. The complex is composed of two ATP-binding proteins (XylG), two transmembrane proteins (XylH) and a solute-binding protein (XylF).

It localises to the cell inner membrane. It catalyses the reaction D-xylose(out) + ATP + H2O = D-xylose(in) + ADP + phosphate + H(+). Its function is as follows. Part of the ABC transporter complex XylFGH involved in xylose import. Responsible for energy coupling to the transport system. The chain is Xylose import ATP-binding protein XylG from Escherichia coli (strain UTI89 / UPEC).